The primary structure comprises 2377 residues: Serine/threonine-protein kinase WNK1 (2377 aa).

2 disordered regions span residues 1-79 and 93-203; these read MSDG…RFFR and LPGL…QQDD. Phosphothreonine is present on residues T17 and T58. The segment covering 48–64 has biased composition (basic and acidic residues); sequence RTEEYRRRRHTMDKDSR. Composition is skewed to low complexity over residues 101–111 and 127–141; these read PQPSVPAVVPQ and VASQ…AASP. The span at 149-158 shows a compositional bias: polar residues; that stretch reads SATTTVPSST. Phosphoserine is present on residues S165 and S172. The Protein kinase domain maps to 221 to 479; sequence LKFDIEIGRG…IKDLLNHAFF (259 aa). ATP is bound at residue S231. Chloride contacts are provided by F283 and L299. ATP is bound by residues 301-304 and K351; that span reads TELM. Residue D368 is the Proton acceptor of the active site. The chloride site is built by L369 and L371. Residues S378 and S382 each carry the phosphoserine; by autocatalysis modification. Positions 488 to 555 are autoinhibitory domain; the sequence is ELAEEDDGEK…VCEGDHKTMA (68 aa). A compositionally biased stretch (basic and acidic residues) spans 573-588; sequence QLVREEQEKRKQEESS. Disordered stretches follow at residues 573 to 782 and 1013 to 1114; these read QLVR…SAGT and PAVS…SRPK. Polar residues-rich tracts occupy residues 593 to 628, 638 to 705, and 713 to 733; these read NEQQ…STQV, HQQL…QSQP, and SMAQ…VLSS. The segment at 629 to 639 is interaction with KLHL3; it reads EPEEPEADQHQ. Positions 734-746 are enriched in low complexity; it reads QPIQHPQQQGIQP. Residues 747–782 are compositionally biased toward polar residues; that stretch reads TVPSQQAVQYSLPQAASSSEGTTAQPVSQPQVSAGT. The span at 1018–1028 shows a compositional bias: low complexity; sequence TQQPPTTSSQQ. Residues 1029–1038 are compositionally biased toward polar residues; the sequence is AVLESTQGVS. The segment covering 1042 to 1058 has biased composition (low complexity); sequence PPEQTPITQSQPTQPVP. A compositionally biased stretch (polar residues) spans 1075-1085; it reads SDGNENAPSSS. The span at 1093–1114 shows a compositional bias: basic residues; it reads TKRHYRKSVRSRSRHEKTSRPK. The short motif at 1252–1255 is the RFXV motif 1 element; it reads RFIV. At S1256 the chain carries Phosphoserine. 2 disordered regions span residues 1726–1760 and 1818–1847; these read GQVS…TVVP and TMSS…SSGA. A compositionally biased stretch (low complexity) spans 1738 to 1748; sequence PVGTATGVKPG. Residue T1843 is modified to Phosphothreonine. The RFXV motif 2 signature appears at 1854–1857; that stretch reads RFQV. Residues 1860 to 1945 form a disordered region; sequence TMDDAQKERK…TKVGRFQVTT (86 aa). Basic and acidic residues predominate over residues 1863–1879; sequence DAQKERKNRSEDTKSVH. The segment covering 1882–1900 has biased composition (low complexity); that stretch reads SSTSESSVLSSSSPESTLV. 2 consecutive short sequence motifs (RFXV motif) follow at residues 1940-1943 and 1952-1955; these read RFQV and RFSV. Residues 1959–1969 are compositionally biased toward basic and acidic residues; sequence EDKVTELKKEG. Disordered regions lie at residues 1959–1984, 1989–2008, 2015–2064, 2107–2191, and 2203–2239; these read EDKV…QTVI, PKKE…PSSD, SRGT…DIED, VIIP…NLYS, and SLSA…SRKG. S1973 is subject to Phosphoserine. Residues 1989-1998 show a composition bias toward basic and acidic residues; the sequence is PKKEKPELAE. 5 positions are modified to phosphoserine: S2006, S2007, S2022, S2024, and S2027. Positions 2035–2057 are enriched in low complexity; sequence SLPVQNLSQSLSNSFNSSYMSSD. Phosphoserine is present on S2116. Positions 2117-2129 are enriched in basic residues; that stretch reads GRRRRPTKSKGSK. Residues 2130–2140 are compositionally biased toward low complexity; it reads SSRSSSLGNKS. Over residues 2141–2191 the composition is skewed to polar residues; the sequence is PQLSGNLSGQSGTSVLHPQQTLHPAGNTPETGHNQLLQPLKPSPSSDNLYS. Low complexity predominate over residues 2208-2232; sequence GQGTSSTNTVGGTVSSQAAQAQPPA. Residues 2236-2256 form an amphipathic alpha-helix region; it reads SRKGTFTDDLHKLVDNWARDA. Phosphoserine is present on residues S2265 and S2281. The interval 2325-2344 is disordered; that stretch reads PAPFGTQWSGTGGPAPQPLG. Phosphoserine is present on residues S2365 and S2367.

The protein belongs to the protein kinase superfamily. Ser/Thr protein kinase family. WNK subfamily. Interacts with WNK3. Interacts with WNK4; inhibiting the activity of WNK4. Interacts with SGK1; promoting its activation. Associates with the mTORC2 complex. Interacts with UVRAG. In terms of assembly, interacts with isoform 1; inhibiting isoform 1 activity. Requires Mg(2+) as cofactor. In terms of processing, autophosphorylated at Ser-378 and Ser-382, promoting its activity. Autophosphorylation at Ser-382 is inhibited by intracellular calcium. Phosphorylation at Thr-58 increases ability to activate SGK1. Post-translationally, ubiquitinated by the BCR(KLHL3) complex, leading to its degradation. Also ubiquitinated by the BCR(KLHL2) complex. May be O-glycosylated. Widely expressed in both adult and embryonic tissue, with highest levels observed in the testis and lower levels in heart, lung, kidney, placenta, brain and skeletal muscle. Expressed in pancreatic duct. Two isoforms are expressed in heart, a single shorter isoform in the kidney. Locates to the distal convoluted tubule, the medullary collecting duct and the cortical collecting duct of the kidney. In terms of tissue distribution, restricted to the nervous system, expressed preferentially in sensory neurons than in motor neurons and in general more abundant in axons than in cell bodies (at protein level). In the DRG, predominantly expressed in the satellite cells that envelop sensory neurons, but low expression also observed in the cell bodies of neurons (at protein level). In the sciatic nerve, expressed in the Schwann cells that surround axons and in a mosaic distribution of axons (at protein level). In the spinal cord, expressed in superficial layers (LI and LII), as well as in the fibers of the Lissauer tract (at protein level). Also detected in the axon fibers of dorsolateral funiculus and lateral funiculus (at protein level).

The protein localises to the cytoplasm. The protein resides in the nucleus. It is found in the cytoskeleton. Its subcellular location is the spindle. The catalysed reaction is L-seryl-[protein] + ATP = O-phospho-L-seryl-[protein] + ADP + H(+). It catalyses the reaction L-threonyl-[protein] + ATP = O-phospho-L-threonyl-[protein] + ADP + H(+). Activated in response to hyperosmotic stress: cell shrinkage promotes formation of a membraneless compartment that concentrates WNK1 with its substrates, OXSR1/OSR1 and STK39/SPAK. Activation requires autophosphorylation of Ser-382 and, to a lower extent, Ser-378. Autophosphorylation and subsequent activation is inhibited by increases in intracellular ionic strength: Cl(-) potently inhibits WNK1 kinase activity via direct binding. Also inhibited by K(+) ions. Serine/threonine-protein kinase component of the WNK1-SPAK/OSR1 kinase cascade, which acts as a key regulator of blood pressure and regulatory volume increase by promoting ion influx. WNK1 mediates regulatory volume increase in response to hyperosmotic stress by acting as a molecular crowding sensor, which senses cell shrinkage and mediates formation of a membraneless compartment by undergoing liquid-liquid phase separation. The membraneless compartment concentrates WNK1 with its substrates, OXSR1/OSR1 and STK39/SPAK, promoting WNK1-dependent phosphorylation and activation of downstream kinases OXSR1/OSR1 and STK39/SPAK. Following activation, OXSR1/OSR1 and STK39/SPAK catalyze phosphorylation of ion cotransporters SLC12A1/NKCC2, SLC12A2/NKCC1, SLC12A5/KCC2 and SLC12A6/KCC3, regulating their activity. Phosphorylation of Na-K-Cl cotransporters SLC12A2/NKCC1 and SLC12A2/NKCC1 promote their activation and ion influx; simultaneously, phosphorylation of K-Cl cotransporters SLC12A5/KCC2 and SLC12A6/KCC3 inhibit their activity, blocking ion efflux. Also acts as a regulator of angiogenesis in endothelial cells. Also acts independently of the WNK1-SPAK/OSR1 kinase cascade by catalyzing phosphorylation of other substrates, such as SYT2, PCF11 and NEDD4L. Mediates phosphorylation of SYT2, regulating SYT2 association with phospholipids and membrane-binding. Regulates mRNA export in the nucleus by mediating phosphorylation of PCF11, thereby decreasing the association between PCF11 and POLR2A/RNA polymerase II and promoting mRNA export to the cytoplasm. Acts as a negative regulator of autophagy. Required for the abscission step during mitosis, independently of the WNK1-SPAK/OSR1 kinase cascade. WNK1 may also play a role in actin cytoskeletal reorganization. Also acts as a scaffold protein independently of its protein kinase activity: negatively regulates cell membrane localization of various transporters and channels, such as SLC4A4, SLC26A6, SLC26A9, TRPV4 and CFTR. Involved in the regulation of epithelial Na(+) channel (ENaC) by promoting activation of SGK1 in a kinase-independent manner: probably acts as a scaffold protein that promotes the recruitment of SGK1 to the mTORC2 complex in response to chloride, leading to mTORC2-dependent phosphorylation and activation of SGK1. Acts as an assembly factor for the ER membrane protein complex independently of its protein kinase activity: associates with EMC2 in the cytoplasm via its amphipathic alpha-helix, and prevents EMC2 ubiquitination and subsequent degradation, thereby promoting EMC2 stabilization. Its function is as follows. Kinase-defective isoform specifically expressed in kidney, which acts as a dominant-negative regulator of the longer isoform 1. Does not directly inhibit WNK4 and has no direct effect on sodium and chloride ion transport. Down-regulates sodium-chloride cotransporter activity indirectly by inhibiting isoform 1, it associates with isoform 1 and attenuates its kinase activity. In kidney, may play an important role regulating sodium and potassium balance. This is Serine/threonine-protein kinase WNK1 from Mus musculus (Mouse).